Consider the following 353-residue polypeptide: Lipase-specific foldase (353 aa).

The Cytoplasmic segment spans residues 1-19 (MAQADRPARGGLAARPMRG). Residues 20–40 (ASFALAGLVACAACAAVVLWL) traverse the membrane as a helical segment. Topologically, residues 41 to 353 (RPAAPSPAPA…AASLDRGAGG (313 aa)) are periplasmic.

The protein belongs to the lipase chaperone family. As to quaternary structure, monomer. Interacts with lipase (lip).

It localises to the cell inner membrane. Functionally, involved in the folding of the extracellular lipase (lip) during its passage through the periplasm. In Burkholderia plantarii, this protein is Lipase-specific foldase.